The primary structure comprises 569 residues: WD repeat-containing protein 20 (569 aa).

Ala2 carries the post-translational modification N-acetylalanine. WD repeat units lie at residues 94–138, 139–210, 211–252, 253–331, 332–426, 427–523, and 524–559; these read RIYK…KETS, KLFN…KSTR, NPLL…FDSV, ELHG…SGSD, EDFQ…NSVP, PPLP…VPLL, and EPLICKKIAHERLTVLIFLEDCIVTACQEGFICTWG. Phosphoserine occurs at positions 357 and 360. 2 stretches are compositionally biased toward polar residues: residues 405–423 and 431–445; these read NATSPPAGSNGNSVTTPGN and RSNSLPHSAVSNAGS. The tract at residues 405–445 is disordered; sequence NATSPPAGSNGNSVTTPGNSVPPPLPRSNSLPHSAVSNAGS. 3 positions are modified to phosphoserine: Ser432, Ser434, and Ser465. Residues 450–468 form a mediates XPO1-dependent nuclear export of WDR20-USP12 complexes region; the sequence is MDGAIASGVSKFATLSLHD.

As to quaternary structure, interacts with USP12; promotes translocation of USP12/WDR20 to the plasma membrane. Component of the USP12/WDR20/WDR48 deubiquitinating complex. Interacts with USP46; contributes to the cytoplasmic localization of the USP46/WDR20 complex. Component of the USP12/DMWD/WDR48 deubiquitinating complex.

The protein localises to the cytoplasm. It localises to the nucleus. In terms of biological role, regulator of deubiquitinating complexes. Activates deubiquitinating activity of complexes containing USP12. Anchors at the base of the ubiquitin-contacting loop of USP12 and remotely modulates the catalytic center of the enzyme. Regulates shuttling of the USP12 deubiquitinase complex between the plasma membrane, cytoplasm and nucleus. This is WD repeat-containing protein 20 (WDR20) from Homo sapiens (Human).